Reading from the N-terminus, the 289-residue chain is Diaminopimelate epimerase (289 aa).

Asparagine 11 and asparagine 78 together coordinate substrate. Cysteine 87 serves as the catalytic Proton donor. Substrate is bound by residues glycine 88–asparagine 89, asparagine 163, asparagine 199, and glutamate 217–arginine 218. Cysteine 226 acts as the Proton acceptor in catalysis. Position 227–228 (glycine 227–threonine 228) interacts with substrate.

Belongs to the diaminopimelate epimerase family. As to quaternary structure, homodimer.

Its subcellular location is the cytoplasm. It carries out the reaction (2S,6S)-2,6-diaminopimelate = meso-2,6-diaminopimelate. Its pathway is amino-acid biosynthesis; L-lysine biosynthesis via DAP pathway; DL-2,6-diaminopimelate from LL-2,6-diaminopimelate: step 1/1. Catalyzes the stereoinversion of LL-2,6-diaminopimelate (L,L-DAP) to meso-diaminopimelate (meso-DAP), a precursor of L-lysine and an essential component of the bacterial peptidoglycan. The protein is Diaminopimelate epimerase of Rhodococcus jostii (strain RHA1).